Consider the following 243-residue polypeptide: Adenosylcobinamide-GDP ribazoletransferase (243 aa).

7 helical membrane passes run 8–28 (WLGA…PIQL), 36–56 (PWVG…LDFL), 58–78 (VPSP…TGGL), 107–127 (AGAF…TSLS), 131–151 (KGSV…WAIA), 187–207 (FLLP…LLIP), and 222–242 (YGAV…VGSA).

It belongs to the CobS family. Mg(2+) is required as a cofactor.

The protein resides in the cell inner membrane. It carries out the reaction alpha-ribazole + adenosylcob(III)inamide-GDP = adenosylcob(III)alamin + GMP + H(+). The enzyme catalyses alpha-ribazole 5'-phosphate + adenosylcob(III)inamide-GDP = adenosylcob(III)alamin 5'-phosphate + GMP + H(+). The protein operates within cofactor biosynthesis; adenosylcobalamin biosynthesis; adenosylcobalamin from cob(II)yrinate a,c-diamide: step 7/7. Joins adenosylcobinamide-GDP and alpha-ribazole to generate adenosylcobalamin (Ado-cobalamin). Also synthesizes adenosylcobalamin 5'-phosphate from adenosylcobinamide-GDP and alpha-ribazole 5'-phosphate. The sequence is that of Adenosylcobinamide-GDP ribazoletransferase from Thermosynechococcus vestitus (strain NIES-2133 / IAM M-273 / BP-1).